The sequence spans 435 residues: Ribosomal protein uS12 methylthiotransferase RimO (435 aa).

The 117-residue stretch at Lys-2–Tyr-118 folds into the MTTase N-terminal domain. Positions 11, 47, 81, 150, 154, and 157 each coordinate [4Fe-4S] cluster. Residues Ile-136–Asn-364 form the Radical SAM core domain. The TRAM domain maps to Glu-367 to Glu-435.

Belongs to the methylthiotransferase family. RimO subfamily. It depends on [4Fe-4S] cluster as a cofactor.

Its subcellular location is the cytoplasm. It catalyses the reaction L-aspartate(89)-[ribosomal protein uS12]-hydrogen + (sulfur carrier)-SH + AH2 + 2 S-adenosyl-L-methionine = 3-methylsulfanyl-L-aspartate(89)-[ribosomal protein uS12]-hydrogen + (sulfur carrier)-H + 5'-deoxyadenosine + L-methionine + A + S-adenosyl-L-homocysteine + 2 H(+). Its function is as follows. Catalyzes the methylthiolation of an aspartic acid residue of ribosomal protein uS12. In Petrotoga mobilis (strain DSM 10674 / SJ95), this protein is Ribosomal protein uS12 methylthiotransferase RimO.